The primary structure comprises 265 residues: Glutamate 5-kinase (265 aa).

Lys15 is a binding site for ATP. 3 residues coordinate substrate: Ser55, Asp142, and Asn158. Residues 178-179 (SD) and 220-226 (TGGMVTK) each bind ATP.

Belongs to the glutamate 5-kinase family.

It localises to the cytoplasm. The enzyme catalyses L-glutamate + ATP = L-glutamyl 5-phosphate + ADP. Its pathway is amino-acid biosynthesis; L-proline biosynthesis; L-glutamate 5-semialdehyde from L-glutamate: step 1/2. Catalyzes the transfer of a phosphate group to glutamate to form L-glutamate 5-phosphate. This Lactiplantibacillus plantarum (strain ATCC BAA-793 / NCIMB 8826 / WCFS1) (Lactobacillus plantarum) protein is Glutamate 5-kinase.